Here is a 264-residue protein sequence, read N- to C-terminus: Na(+)-translocating NADH-quinone reductase subunit E (264 aa).

The next 6 helical transmembrane spans lie at 11–31 (VFGIFLQATFIQNILLSNFLG), 50–70 (MSVALVLTVTGSINWVVHTFI), 90–110 (FLELIIFIVVIAAFTQILELL), 123–143 (GIFLPLIAVNCAILGGVLFGI), 149–169 (FIPMMIFSLGAGCGWWLAIVL), and 189–209 (MGISFITTGLIAMAFMSLTGI).

It belongs to the NqrDE/RnfAE family. As to quaternary structure, composed of six subunits; NqrA, NqrB, NqrC, NqrD, NqrE and NqrF.

It is found in the cell inner membrane. The catalysed reaction is a ubiquinone + n Na(+)(in) + NADH + H(+) = a ubiquinol + n Na(+)(out) + NAD(+). In terms of biological role, NQR complex catalyzes the reduction of ubiquinone-1 to ubiquinol by two successive reactions, coupled with the transport of Na(+) ions from the cytoplasm to the periplasm. NqrA to NqrE are probably involved in the second step, the conversion of ubisemiquinone to ubiquinol. The polypeptide is Na(+)-translocating NADH-quinone reductase subunit E (Chlamydia caviae (strain ATCC VR-813 / DSM 19441 / 03DC25 / GPIC) (Chlamydophila caviae)).